Here is a 115-residue protein sequence, read N- to C-terminus: U3-lycotoxin-Ls1s (115 aa).

An N-terminal signal peptide occupies residues 1-20 (MKFVLLFGVFLLTLFSYSSS). Residues 21–44 (EMLDDFDQADEDELLSLIEKEEAR) constitute a propeptide that is removed on maturation. 4 disulfides stabilise this stretch: Cys48-Cys63, Cys55-Cys72, Cys62-Cys87, and Cys74-Cys85.

Belongs to the neurotoxin 19 (CSTX) family. 01 subfamily. In terms of tissue distribution, expressed by the venom gland.

It localises to the secreted. The polypeptide is U3-lycotoxin-Ls1s (Lycosa singoriensis (Wolf spider)).